The chain runs to 1427 residues: A disintegrin and metalloproteinase with thrombospondin motifs 13 (1427 aa).

A signal peptide spans 1–29 (MHQRHPRARCPPLCVAGILACGFLLGCWG). The propeptide occupies 30 to 74 (PSHFQQSCLQALEPQAVSSYLSPGAPLKGRPPSPGFQRQRQRQRR). A disordered region spans residues 51-70 (SPGAPLKGRPPSPGFQRQRQ). Positions 80–286 (LHLELLVAVG…GRARCVWDPP (207 aa)) constitute a Peptidase M12B domain. Glu-83 contacts Ca(2+). 2 N-linked (GlcNAc...) asparagine glycosylation sites follow: Asn-142 and Asn-146. Intrachain disulfides connect Cys-155/Cys-208, Cys-202/Cys-281, and Cys-242/Cys-265. Ca(2+) is bound by residues Asp-173, Asp-182, Glu-184, Asp-187, and Glu-212. His-224 serves as a coordination point for Zn(2+). Glu-225 is an active-site residue. Positions 228 and 234 each coordinate Zn(2+). Ca(2+)-binding residues include Cys-281 and Asp-284. A Disintegrin domain is found at 287 to 383 (RPQPGSAGHP…LVELTPIAAV (97 aa)). Intrachain disulfides connect Cys-311–Cys-337, Cys-322–Cys-347, Cys-332–Cys-366, and Cys-360–Cys-371. Residues 384–439 (HGRWSSWGPRSPCSRSCGGGVVTRRRQCNNPRPAFGGRACVGADLQAEMCNTQACE) form the TSP type-1 1 domain. C-linked (Man) tryptophan glycosylation is present at Trp-387. 8 disulfide bridges follow: Cys-396/Cys-433, Cys-400/Cys-438, Cys-411/Cys-423, Cys-450/Cys-487, Cys-483/Cys-522, Cys-508/Cys-527, Cys-532/Cys-548, and Cys-545/Cys-555. O-linked (Fuc...) serine glycosylation is present at Ser-399. Positions 440–556 (KTQLEFMSQQ…VCGGDNSTCS (117 aa)) are cysteine-rich. A Cell attachment site motif is present at residues 498 to 500 (RGD). N-linked (GlcNAc...) asparagine glycosylation is found at Asn-552, Asn-579, and Asn-614. The spacer stretch occupies residues 556–685 (SPRKGSFTAG…TYFQPKPRQA (130 aa)). The N-linked (GlcNAc...) (complex) asparagine glycan is linked to Asn-667. TSP type-1 domains lie at 682–730 (PRQA…SQQP), 742–805 (CPPY…QPCP), 808–859 (WEVS…PEPC), 896–950 (VWTP…QAVP), 951–1011 (CPAR…SLEP), 1012–1068 (CPPR…VPCL), and 1072–1131 (CTYR…GPCV). Ser-698 carries an O-linked (Fuc...) serine glycan. Asn-707 carries an N-linked (GlcNAc...) (complex) asparagine glycan. The O-linked (Fuc...) serine glycan is linked to Ser-757. N-linked (GlcNAc...) asparagine glycosylation occurs at Asn-828. 4 O-linked (Fuc...) serine glycosylation sites follow: Ser-907, Ser-965, Ser-1027, and Ser-1087. CUB domains lie at 1192–1298 (CGRQ…FYRE) and 1299–1427 (CDMQ…KEGT). Asn-1235 and Asn-1354 each carry an N-linked (GlcNAc...) asparagine glycan.

Zn(2+) serves as cofactor. Ca(2+) is required as a cofactor. In terms of processing, glycosylated. O-fucosylated by POFUT2 on a serine or a threonine residue found within the consensus sequence C1-X(2)-(S/T)-C2-G of the TSP type-1 repeat domains where C1 and C2 are the first and second cysteine residue of the repeat, respectively. Fucosylated repeats can then be further glycosylated by the addition of a beta-1,3-glucose residue by the glucosyltransferase, B3GALTL. Fucosylation mediates the efficient secretion of ADAMTS13. May also be C-glycosylated on tryptophan residues within the consensus sequence W-X-X-W of the TPRs, and also N-glycosylated. These other glycosylations can also facilitate secretion. Post-translationally, the precursor is processed by a furin endopeptidase which cleaves off the pro-domain. In terms of tissue distribution, plasma. Expressed primarily in liver.

The protein localises to the secreted. It carries out the reaction The enzyme cleaves the von Willebrand factor at bond 842-Tyr-|-Met-843 within the A2 domain.. Zinc and calcium ions cooperatively modulate enzyme activity. The cleavage of the pro-domain is not required for protease activity. Dependence on calcium for proteolytic activity is mediated by the high affinity site. Functionally, cleaves the vWF multimers in plasma into smaller forms thereby controlling vWF-mediated platelet thrombus formation. The chain is A disintegrin and metalloproteinase with thrombospondin motifs 13 (ADAMTS13) from Homo sapiens (Human).